A 427-amino-acid chain; its full sequence is MSRSEELYTKAQISIPGGVNSPVRAFNGVGGSPIFFESAEGAYMIDADGKRYIDYVGSWGPMILGHNHPAVLEATLQAAKRGLSFGTPTEVEITMAETIRKIVPSIEKVRMVNSGTEATMTAIRLARGYTGRDKILKFEGNYHGHADSLLVKAGSGALTLGVPNSPGIPEDFAKHTLTATYNDIESVKQIFAEMGDEIACIIVEPVAGNMNCIPPVDGFLEGLRSICDDHGSVLIFDEVMTGFRVAPGGAQDRYKIKPDLTTLGKVIGGGMPVGAFGGKKEVMDYIAPVGPVYQAGTLSGNPVAMAAGLAALQQLSTPGLYDQLYQRVDTLLDGLQERADRAGVPMTTNRAGSMFGFFFTEEPEVTTYAQATQCNMEHFKTFYHAMLEQGVYLAPSAFEGGFMSAAHSEEDIQNTLNAAEKAFAKLV.

The residue at position 265 (Lys-265) is an N6-(pyridoxal phosphate)lysine.

The protein belongs to the class-III pyridoxal-phosphate-dependent aminotransferase family. HemL subfamily. Homodimer. Pyridoxal 5'-phosphate serves as cofactor.

The protein localises to the cytoplasm. The enzyme catalyses (S)-4-amino-5-oxopentanoate = 5-aminolevulinate. The protein operates within porphyrin-containing compound metabolism; protoporphyrin-IX biosynthesis; 5-aminolevulinate from L-glutamyl-tRNA(Glu): step 2/2. The polypeptide is Glutamate-1-semialdehyde 2,1-aminomutase (Idiomarina loihiensis (strain ATCC BAA-735 / DSM 15497 / L2-TR)).